The primary structure comprises 357 residues: Outer membrane protein YedS (357 aa).

Positions 1–21 are cleaved as a signal peptide; sequence MKRKVLAMLVPALLVAGAANA.

Belongs to the Gram-negative porin family.

Its subcellular location is the cell outer membrane. In terms of biological role, forms pores that allow passive diffusion of small molecules across the outer membrane. Plays a role in resistance to carbapenems; this carbapenem-resistant, noncarbapenemase-producing clinical isolate has a deletion in ompF and a mutated marR gene that does not induce expression of this protein. However if this gene is overexpressed, or if wild-type marR is introduced, this leads to decreased resistance to the carbapenem antibiotics ertapenem, imipenem and meropenem. This Escherichia coli protein is Outer membrane protein YedS.